The following is a 125-amino-acid chain: Large ribosomal subunit protein uL22c (125 aa).

Belongs to the universal ribosomal protein uL22 family. In terms of assembly, part of the 50S ribosomal subunit.

The protein localises to the plastid. It is found in the chloroplast. Functionally, this protein binds specifically to 23S rRNA. In terms of biological role, the globular domain of the protein is located near the polypeptide exit tunnel on the outside of the subunit, while an extended beta-hairpin is found that lines the wall of the exit tunnel in the center of the 70S ribosome. The chain is Large ribosomal subunit protein uL22c (rpl22) from Huperzia lucidula (Shining clubmoss).